Consider the following 245-residue polypeptide: Biosynthetic peptidoglycan transglycosylase (245 aa).

Residues 13-35 (VGLARWIVYAGSVFAGAWLATQL) traverse the membrane as a helical segment.

This sequence belongs to the glycosyltransferase 51 family.

The protein localises to the cell inner membrane. The catalysed reaction is [GlcNAc-(1-&gt;4)-Mur2Ac(oyl-L-Ala-gamma-D-Glu-L-Lys-D-Ala-D-Ala)](n)-di-trans,octa-cis-undecaprenyl diphosphate + beta-D-GlcNAc-(1-&gt;4)-Mur2Ac(oyl-L-Ala-gamma-D-Glu-L-Lys-D-Ala-D-Ala)-di-trans,octa-cis-undecaprenyl diphosphate = [GlcNAc-(1-&gt;4)-Mur2Ac(oyl-L-Ala-gamma-D-Glu-L-Lys-D-Ala-D-Ala)](n+1)-di-trans,octa-cis-undecaprenyl diphosphate + di-trans,octa-cis-undecaprenyl diphosphate + H(+). The protein operates within cell wall biogenesis; peptidoglycan biosynthesis. Functionally, peptidoglycan polymerase that catalyzes glycan chain elongation from lipid-linked precursors. The chain is Biosynthetic peptidoglycan transglycosylase from Burkholderia vietnamiensis (strain G4 / LMG 22486) (Burkholderia cepacia (strain R1808)).